A 218-amino-acid polypeptide reads, in one-letter code: Urease accessory protein UreG (218 aa).

22 to 29 (GPVGSGKT) lines the GTP pocket.

It belongs to the SIMIBI class G3E GTPase family. UreG subfamily. Homodimer. UreD, UreF and UreG form a complex that acts as a GTP-hydrolysis-dependent molecular chaperone, activating the urease apoprotein by helping to assemble the nickel containing metallocenter of UreC. The UreE protein probably delivers the nickel.

Its subcellular location is the cytoplasm. In terms of biological role, facilitates the functional incorporation of the urease nickel metallocenter. This process requires GTP hydrolysis, probably effectuated by UreG. The polypeptide is Urease accessory protein UreG (Polaromonas sp. (strain JS666 / ATCC BAA-500)).